The following is a 316-amino-acid chain: MGPVRHILNERKSRKIAAFLLINTAYMFVEFTSGFMSDSLGLISDACHMLFDCAALAIGLYASYIARLPANGLYNYGRGRFEVLSGYVNAVFLVLVGALIVLESFERILEPREISTSSLLTVSIGGLVVNVIGLVFFHEEHHHAHGEAHSCNGGLQSSENHNKSRNRHHIDHNMEGIFLHVLADTMGSVGVVISTLLIKYKGWLIADPICSVFISIMIVSSVLPLLRNSAEILLQRVPRSLEKDIKEALDDVMKIKGVIGVHNFHVWNLTNTDIVGTFHLHITTEADKSSIREKASDIFHEAGIQDLTIQIECVKR.

The Cytoplasmic segment spans residues 1–15; the sequence is MGPVRHILNERKSRK. Residues 16 to 36 form a helical membrane-spanning segment; that stretch reads IAAFLLINTAYMFVEFTSGFM. The Vacuolar portion of the chain corresponds to 37-45; it reads SDSLGLISD. Residues 46–66 traverse the membrane as a helical segment; it reads ACHMLFDCAALAIGLYASYIA. Residues 67–80 are Cytoplasmic-facing; the sequence is RLPANGLYNYGRGR. Residues 81 to 101 form a helical membrane-spanning segment; that stretch reads FEVLSGYVNAVFLVLVGALIV. Topologically, residues 102–116 are vacuolar; sequence LESFERILEPREIST. Residues 117–137 traverse the membrane as a helical segment; the sequence is SSLLTVSIGGLVVNVIGLVFF. At 138–176 the chain is on the cytoplasmic side; the sequence is HEEHHHAHGEAHSCNGGLQSSENHNKSRNRHHIDHNMEG. The tract at residues 147 to 166 is disordered; it reads EAHSCNGGLQSSENHNKSRN. A helical membrane pass occupies residues 177-197; it reads IFLHVLADTMGSVGVVISTLL. Over 198–202 the chain is Vacuolar; that stretch reads IKYKG. A helical transmembrane segment spans residues 203–223; it reads WLIADPICSVFISIMIVSSVL. Over 224–316 the chain is Cytoplasmic; sequence PLLRNSAEIL…LTIQIECVKR (93 aa).

This sequence belongs to the cation diffusion facilitator (CDF) transporter (TC 2.A.4) family. SLC30A subfamily.

It localises to the vacuole membrane. In terms of biological role, involved in sequestration of excess metal in the cytoplasm into vacuoles to maintain metal homeostasis. This Oryza sativa subsp. japonica (Rice) protein is Metal tolerance protein 8 (MTP8).